A 383-amino-acid chain; its full sequence is Galactokinase (383 aa).

34-37 (EHTD) is a substrate binding site. An ATP-binding site is contributed by 124–130 (GAGLSSS). Mg(2+) is bound by residues Ser130 and Glu162. Asp174 functions as the Proton acceptor in the catalytic mechanism. Tyr223 is a substrate binding site.

Belongs to the GHMP kinase family. GalK subfamily.

It localises to the cytoplasm. The enzyme catalyses alpha-D-galactose + ATP = alpha-D-galactose 1-phosphate + ADP + H(+). It functions in the pathway carbohydrate metabolism; galactose metabolism. Catalyzes the transfer of the gamma-phosphate of ATP to D-galactose to form alpha-D-galactose-1-phosphate (Gal-1-P). This chain is Galactokinase, found in Yersinia pseudotuberculosis serotype O:1b (strain IP 31758).